Here is a 974-residue protein sequence, read N- to C-terminus: Glycine dehydrogenase (decarboxylating) (974 aa).

Position 720 is an N6-(pyridoxal phosphate)lysine (Lys720).

This sequence belongs to the GcvP family. As to quaternary structure, the glycine cleavage system is composed of four proteins: P, T, L and H. Pyridoxal 5'-phosphate is required as a cofactor.

The enzyme catalyses N(6)-[(R)-lipoyl]-L-lysyl-[glycine-cleavage complex H protein] + glycine + H(+) = N(6)-[(R)-S(8)-aminomethyldihydrolipoyl]-L-lysyl-[glycine-cleavage complex H protein] + CO2. The glycine cleavage system catalyzes the degradation of glycine. The P protein binds the alpha-amino group of glycine through its pyridoxal phosphate cofactor; CO(2) is released and the remaining methylamine moiety is then transferred to the lipoamide cofactor of the H protein. This is Glycine dehydrogenase (decarboxylating) from Cupriavidus metallidurans (strain ATCC 43123 / DSM 2839 / NBRC 102507 / CH34) (Ralstonia metallidurans).